A 365-amino-acid polypeptide reads, in one-letter code: Myocyte-specific enhancer factor 2B (365 aa).

Positions 3-57 (RKKIQISRILDQRNRQVTFTKRKFGLMKKAYELSVLCDCEIALIIFNSANRLFQY) constitute an MADS-box domain. Residues 58–86 (ASTDMDRVLLKYTEYSEPHESRTNTDILE) constitute a DNA-binding region (mef2-type). Disordered stretches follow at residues 94–124 (GLDG…GDPA), 142–309 (VVYG…SPGP), and 321–365 (AGCP…KTQQ). Residues 98 to 108 (PELEPDEGPEE) show a composition bias toward acidic residues. Residues 223–240 (NTSRSLYSGLQNPCSTAT) are compositionally biased toward polar residues. Low complexity-rich tracts occupy residues 277 to 289 (PQSA…SLRP) and 326 to 346 (PTAG…SPGT). Positions 354 to 365 (TSLQASSEKTQQ) are enriched in polar residues.

Belongs to the MEF2 family. In terms of assembly, interacts with HDAC7. Heterodimer. Interacts with HDAC9. Expressed in skeletal and cardiac muscle and brain.

It localises to the nucleus. Its function is as follows. Transcriptional activator which binds specifically to the MEF2 element, 5'-YTA[AT](4)TAR-3', found in numerous muscle-specific genes. Activates transcription via this element. May be involved in muscle-specific and/or growth factor-related transcription. In Homo sapiens (Human), this protein is Myocyte-specific enhancer factor 2B (MEF2B).